Consider the following 213-residue polypeptide: Uridine kinase (213 aa).

15-22 (GASASGKS) serves as a coordination point for ATP.

It belongs to the uridine kinase family.

The protein localises to the cytoplasm. It catalyses the reaction uridine + ATP = UMP + ADP + H(+). The enzyme catalyses cytidine + ATP = CMP + ADP + H(+). It participates in pyrimidine metabolism; CTP biosynthesis via salvage pathway; CTP from cytidine: step 1/3. It functions in the pathway pyrimidine metabolism; UMP biosynthesis via salvage pathway; UMP from uridine: step 1/1. The chain is Uridine kinase from Enterobacter sp. (strain 638).